A 409-amino-acid polypeptide reads, in one-letter code: MSIGVQSSGINISNAELSRLVDAGMSELGGKAVRDDGRALARAEAALAAVVGERVSPRRDAGAGAQRVELAQPKPAAQTRATDRRTVSGMEREHRRLAASQMPAVTGMHEALVQRHVSPGGAKTPGEGGATRVGGDAPRFSFAEDKAFDAMIALGIAMQKNVQSDLVMQGKLTTLAHDAMMSAAAQDRSIGAAQMTAAIAGGALQAATSLGGAVQQMKGLGTKSMSIEKELKPQAELKQFHAEQALELRGINKPVLSNDEVSHVKVKRETGESVRHEIDPGGERMSDEHASVLAQEAPARQHRIDMHGMRHEQNLVKAGRQQMKGDLIQSGGQVGKNQIDGASAQQQGAERAEQKEDESAQQTAMAAASARDEAAHRGRDAAQKAIDAAKSQVANDNAVAAQVAGNLRT.

Disordered stretches follow at residues 268–287 (RETG…RMSD) and 330–396 (SGGQ…VAND). Residues 360-369 (AQQTAMAAAS) show a composition bias toward low complexity. Over residues 370–382 (ARDEAAHRGRDAA) the composition is skewed to basic and acidic residues.

It belongs to the SctB/SipC family.

The protein resides in the secreted. This chain is Effector protein BipC (bipC), found in Burkholderia thailandensis (strain ATCC 700388 / DSM 13276 / CCUG 48851 / CIP 106301 / E264).